The following is a 148-amino-acid chain: Leghemoglobin 3 (148 aa).

A Globin domain is found at 2–148; sequence GFTEKQEALV…LSAAIKKAMS (147 aa). Tyrosine 30 carries the nitrated tyrosine modification. Serine 45 lines the heme b pocket. Serine 45 carries the phosphoserine modification. Histidine 63 is an O2 binding site. Residues lysine 66, histidine 95, and lysine 98 each contribute to the heme b site. At tyrosine 136 the chain carries Nitrated tyrosine.

It belongs to the plant globin family. In terms of assembly, monomer. Nitrated in effective nodules and particularly in hypoxic conditions; this mechanism may play a protective role in the symbiosis by buffering toxic peroxynitrite NO(2)(-). Nitration level decrease during nodule senescence. Post-translationally, phosphorylation at Ser-45 disrupts the molecular environment of its porphyrin ring oxygen binding pocket, thus leading to a reduced oxygen consumption and to the delivery of oxygen O(2) to symbiosomes. Stem nodules.

The protein resides in the cytoplasm. It localises to the cytosol. The protein localises to the nucleus. Functionally, leghemoglobin that reversibly binds oxygen O(2) through a pentacoordinated heme iron. In stem nodules, facilitates the diffusion of oxygen to the bacteroids while preventing the bacterial nitrogenase from being inactivated by buffering dioxygen, nitric oxide and carbon monoxide, and promoting the formation of reactive oxygen species (ROS, e.g. H(2)O(2)). This role is essential for symbiotic nitrogen fixation (SNF). This is Leghemoglobin 3 from Sesbania rostrata.